The following is a 265-amino-acid chain: Regulator of calcineurin 2 (265 aa).

2 positions are modified to phosphoserine: S104 and S110. Disordered regions lie at residues 127–213 (LLSI…DKSA) and 242–265 (ENDV…EFFH). T132 is subject to Phosphothreonine. 2 stretches are compositionally biased toward low complexity: residues 141-161 (SSSL…LESP) and 182-202 (LSRS…QTSL). A phosphoserine mark is found at S152, S157, S160, S183, S187, S193, S201, and S255.

Post-translationally, phosphorylation of Ser-152 and Ser-160 is induced 2-fold in response to mating pheromone.

It is found in the cytoplasm. The polypeptide is Regulator of calcineurin 2 (RCN2) (Saccharomyces cerevisiae (strain ATCC 204508 / S288c) (Baker's yeast)).